We begin with the raw amino-acid sequence, 396 residues long: 1-deoxy-D-xylulose 5-phosphate reductoisomerase (396 aa).

NADPH-binding residues include threonine 10, glycine 11, serine 12, isoleucine 13, and asparagine 123. Residue lysine 124 coordinates 1-deoxy-D-xylulose 5-phosphate. Residue glutamate 125 coordinates NADPH. Residue aspartate 149 coordinates Mn(2+). Residues serine 150, glutamate 151, serine 185, and histidine 208 each coordinate 1-deoxy-D-xylulose 5-phosphate. Mn(2+) is bound at residue glutamate 151. Glycine 214 contacts NADPH. 1-deoxy-D-xylulose 5-phosphate is bound by residues serine 221, asparagine 226, lysine 227, and glutamate 230. Glutamate 230 contributes to the Mn(2+) binding site.

The protein belongs to the DXR family. Mg(2+) is required as a cofactor. Mn(2+) serves as cofactor.

It catalyses the reaction 2-C-methyl-D-erythritol 4-phosphate + NADP(+) = 1-deoxy-D-xylulose 5-phosphate + NADPH + H(+). It participates in isoprenoid biosynthesis; isopentenyl diphosphate biosynthesis via DXP pathway; isopentenyl diphosphate from 1-deoxy-D-xylulose 5-phosphate: step 1/6. Its function is as follows. Catalyzes the NADPH-dependent rearrangement and reduction of 1-deoxy-D-xylulose-5-phosphate (DXP) to 2-C-methyl-D-erythritol 4-phosphate (MEP). The protein is 1-deoxy-D-xylulose 5-phosphate reductoisomerase of Shewanella baltica (strain OS155 / ATCC BAA-1091).